We begin with the raw amino-acid sequence, 295 residues long: Non-selective voltage-gated ion channel VDAC2 (295 aa).

ATP-binding residues include Lys-24 and Lys-32. Position 32 is an N6-acetyllysine; alternate (Lys-32). N6-succinyllysine; alternate is present on Lys-32. Lys-32 participates in a covalent cross-link: Glycyl lysine isopeptide (Lys-Gly) (interchain with G-Cter in ubiquitin); alternate. 2 beta stranded membrane-spanning segments follow: residues 38–47 (LVKLDVKTKS) and 51–59 (VEFSTSGSS). Residues Lys-65 and Lys-73 each participate in a glycyl lysine isopeptide (Lys-Gly) (interchain with G-Cter in ubiquitin) cross-link. The next 4 membrane-spanning stretches (beta stranded) occupy residues 66–76 (VSGTLETKYKW), 81–88 (LTFTEKWN), 92–101 (TLGTEIAIED), and 107–116 (LKLTFDTTFS). Lys-121 bears the N6-acetyllysine; alternate mark. Residue Lys-121 forms a Glycyl lysine isopeptide (Lys-Gly) (interchain with G-Cter in ubiquitin); alternate linkage. Glycyl lysine isopeptide (Lys-Gly) (interchain with G-Cter in ubiquitin) cross-links involve residues Lys-122 and Lys-125. A run of 4 beta stranded transmembrane segments spans residues 123 to 132 (SGKIKSAYKR), 135 to 142 (INLGCDVD), 149 to 157 (AIHGSAVFG), and 162 to 170 (LAGYQMTFD). Lys-173 participates in a covalent cross-link: Glycyl lysine isopeptide (Lys-Gly) (interchain with G-Cter in ubiquitin). The next 6 beta stranded transmembrane spans lie at 175–187 (KLTR…GYRT), 190–197 (FQLHTNVN), 201–210 (EFGGSIYQKV), 214–223 (FDTSVNLAWT), 230–239 (RFGIAAKYQL), and 243–250 (ASISAKVN). Ser-205 carries the post-translational modification Phosphoserine. A Phosphoserine modification is found at Ser-252. NAD(+) contacts are provided by residues 254–256 (LIG) and 272–276 (SALVD). The next 2 membrane-spanning stretches (beta stranded) occupy residues 254 to 263 (LIGVGYTQTL) and 266 to 275 (GVKLTLSALV). Lys-278 carries the post-translational modification N6-acetyllysine; alternate. A Glycyl lysine isopeptide (Lys-Gly) (interchain with G-Cter in ubiquitin); alternate cross-link involves residue Lys-278. The chain crosses the membrane as a beta stranded span at residues 285 to 294 (HKLGLALELE). Lys-286 participates in a covalent cross-link: Glycyl lysine isopeptide (Lys-Gly) (interchain with G-Cter in ubiquitin).

Belongs to the eukaryotic mitochondrial porin family. In terms of assembly, monomer, homodimer and higher order oligomers; formation of higher order structures is necessary for scramblase activity. Interacts with ARMC12 in a TBC1D21-dependent manner. Interacts with KLC3. Interacts with SPATA33. Interacts with PPP3CC in a SPATA33-dependent manner. Post-translationally, ubiquitinated by PRKN during mitophagy, leading to its degradation and enhancement of mitophagy. Deubiquitinated by USP30.

The protein resides in the mitochondrion outer membrane. Its subcellular location is the membrane. The enzyme catalyses chloride(in) = chloride(out). The catalysed reaction is K(+)(in) = K(+)(out). It carries out the reaction a 1,2-diacyl-sn-glycero-3-phospho-L-serine(in) = a 1,2-diacyl-sn-glycero-3-phospho-L-serine(out). It catalyses the reaction a 1,2-diacyl-sn-glycero-3-phosphocholine(in) = a 1,2-diacyl-sn-glycero-3-phosphocholine(out). The enzyme catalyses a 1,2-diacyl-sn-glycero-3-phospho-(1D-myo-inositol)(in) = a 1,2-diacyl-sn-glycero-3-phospho-(1D-myo-inositol)(out). In terms of biological role, non-selective voltage-gated ion channel that mediates the transport of anions and cations through the mitochondrion outer membrane and plasma membrane. The channel adopts an open conformation at zero mV and a closed conformation at both positive and negative potentials. There are two populations of channels; the main that functions in a lower open-state conductance with lower ion selectivity, that switch, in a voltage-dependent manner, from the open to a low-conducting 'closed' state and the other that has a normal ion selectivity in the typical high conductance, 'open' state. Binds various lipids, including the sphingolipid ceramide, the phospholipid phosphatidylcholine, and the sterols cholesterol and oxysterol. Binding of ceramide promotes the mitochondrial outer membrane permeabilization (MOMP) apoptotic pathway. Catalyzes the scrambling of phospholipids across the outer mitochondrial membrane; the mechanism is unrelated to channel activity and is capable of translocating both anionic and zwitterionic phospholipids. The protein is Non-selective voltage-gated ion channel VDAC2 of Mesocricetus auratus (Golden hamster).